A 375-amino-acid chain; its full sequence is Alcohol dehydrogenase E chain (375 aa).

Ser-2 carries the post-translational modification N-acetylserine. Cys-47, Ser-49, His-68, Cys-98, Cys-101, Cys-104, Cys-112, and Cys-175 together coordinate Zn(2+). Residues Ser-49 and His-68 each contribute to the an alcohol site. Ser-49 contributes to the NAD(+) binding site. Residues 200-205 (GLGGVG), Asp-224, Lys-229, Val-293, 293-295 (VGV), Phe-320, and Arg-370 contribute to the NAD(+) site.

This sequence belongs to the zinc-containing alcohol dehydrogenase family. Class-I subfamily. Dimer of identical or non-identical chains of two types (E and S) coded by 2 separate genes at different loci. It depends on Zn(2+) as a cofactor.

It is found in the cytoplasm. It carries out the reaction a primary alcohol + NAD(+) = an aldehyde + NADH + H(+). It catalyses the reaction a secondary alcohol + NAD(+) = a ketone + NADH + H(+). The polypeptide is Alcohol dehydrogenase E chain (Equus caballus (Horse)).